The sequence spans 74 residues: ATP synthase subunit c (74 aa).

Transmembrane regions (helical) follow at residues 8 to 28 (FIGI…VSNI) and 52 to 72 (IGAG…MLLI).

This sequence belongs to the ATPase C chain family. In terms of assembly, F-type ATPases have 2 components, F(1) - the catalytic core - and F(0) - the membrane proton channel. F(1) has five subunits: alpha(3), beta(3), gamma(1), delta(1), epsilon(1). F(0) has three main subunits: a(1), b(2) and c(10-14). The alpha and beta chains form an alternating ring which encloses part of the gamma chain. F(1) is attached to F(0) by a central stalk formed by the gamma and epsilon chains, while a peripheral stalk is formed by the delta and b chains.

The protein localises to the cell inner membrane. In terms of biological role, f(1)F(0) ATP synthase produces ATP from ADP in the presence of a proton or sodium gradient. F-type ATPases consist of two structural domains, F(1) containing the extramembraneous catalytic core and F(0) containing the membrane proton channel, linked together by a central stalk and a peripheral stalk. During catalysis, ATP synthesis in the catalytic domain of F(1) is coupled via a rotary mechanism of the central stalk subunits to proton translocation. Functionally, key component of the F(0) channel; it plays a direct role in translocation across the membrane. A homomeric c-ring of between 10-14 subunits forms the central stalk rotor element with the F(1) delta and epsilon subunits. This Rickettsia typhi (strain ATCC VR-144 / Wilmington) protein is ATP synthase subunit c.